The sequence spans 290 residues: Acetyl-coenzyme A carboxylase carboxyl transferase subunit beta (290 aa).

The CoA carboxyltransferase N-terminal domain occupies 27–290; that stretch reads LWIKCPSCEA…LTRQPADAVA (264 aa). Cys-31, Cys-34, Cys-50, and Cys-53 together coordinate Zn(2+). Residues 31 to 53 form a C4-type zinc finger; the sequence is CPSCEAVLYRNDVEANLHVCPKC.

The protein belongs to the AccD/PCCB family. Acetyl-CoA carboxylase is a heterohexamer composed of biotin carboxyl carrier protein (AccB), biotin carboxylase (AccC) and two subunits each of ACCase subunit alpha (AccA) and ACCase subunit beta (AccD). It depends on Zn(2+) as a cofactor.

It localises to the cytoplasm. The catalysed reaction is N(6)-carboxybiotinyl-L-lysyl-[protein] + acetyl-CoA = N(6)-biotinyl-L-lysyl-[protein] + malonyl-CoA. Its pathway is lipid metabolism; malonyl-CoA biosynthesis; malonyl-CoA from acetyl-CoA: step 1/1. Functionally, component of the acetyl coenzyme A carboxylase (ACC) complex. Biotin carboxylase (BC) catalyzes the carboxylation of biotin on its carrier protein (BCCP) and then the CO(2) group is transferred by the transcarboxylase to acetyl-CoA to form malonyl-CoA. This chain is Acetyl-coenzyme A carboxylase carboxyl transferase subunit beta, found in Paraburkholderia phymatum (strain DSM 17167 / CIP 108236 / LMG 21445 / STM815) (Burkholderia phymatum).